We begin with the raw amino-acid sequence, 631 residues long: Chaperone protein DnaK (631 aa).

A Phosphothreonine; by autocatalysis modification is found at T198. Positions 602–631 (EAAGGAQQAGKDDVVDAEFTEVDDDKKKSA) are disordered.

It belongs to the heat shock protein 70 family.

Acts as a chaperone. The protein is Chaperone protein DnaK of Rhodopseudomonas palustris (strain ATCC BAA-98 / CGA009).